The sequence spans 165 residues: NADPH-dependent 7-cyano-7-deazaguanine reductase (165 aa).

The disordered stretch occupies residues 1–24; the sequence is MTTRSTDQTEHLRALGQKTPYPAA. Cys-56 serves as the catalytic Thioimide intermediate. Asp-63 functions as the Proton donor in the catalytic mechanism. Substrate contacts are provided by residues 78–80 and 97–98; these read VES and ME.

It belongs to the GTP cyclohydrolase I family. QueF type 1 subfamily.

The protein resides in the cytoplasm. It catalyses the reaction 7-aminomethyl-7-carbaguanine + 2 NADP(+) = 7-cyano-7-deazaguanine + 2 NADPH + 3 H(+). The protein operates within tRNA modification; tRNA-queuosine biosynthesis. Catalyzes the NADPH-dependent reduction of 7-cyano-7-deazaguanine (preQ0) to 7-aminomethyl-7-deazaguanine (preQ1). This is NADPH-dependent 7-cyano-7-deazaguanine reductase from Nitratidesulfovibrio vulgaris (strain ATCC 29579 / DSM 644 / CCUG 34227 / NCIMB 8303 / VKM B-1760 / Hildenborough) (Desulfovibrio vulgaris).